The following is a 24-amino-acid chain: Cytochrome c oxidase subunit 7A2, mitochondrial (24 aa).

Residues 1–13 (FENKVPEKQKLFQ) show a composition bias toward basic and acidic residues. Residues 1-24 (FENKVPEKQKLFQEDNGIPVHLKG) are disordered. N6-acetyllysine is present on Lys10.

The protein belongs to the cytochrome c oxidase VIIa family. Component of the cytochrome c oxidase (complex IV, CIV), a multisubunit enzyme composed of 14 subunits. The complex is composed of a catalytic core of 3 subunits MT-CO1, MT-CO2 and MT-CO3, encoded in the mitochondrial DNA, and 11 supernumerary subunits COX4I, COX5A, COX5B, COX6A, COX6B, COX6C, COX7A, COX7B, COX7C, COX8 and NDUFA4, which are encoded in the nuclear genome. The complex exists as a monomer or a dimer and forms supercomplexes (SCs) in the inner mitochondrial membrane with NADH-ubiquinone oxidoreductase (complex I, CI) and ubiquinol-cytochrome c oxidoreductase (cytochrome b-c1 complex, complex III, CIII), resulting in different assemblies (supercomplex SCI(1)III(2)IV(1) and megacomplex MCI(2)III(2)IV(2)). Interacts with PET100.

The protein resides in the mitochondrion inner membrane. The protein operates within energy metabolism; oxidative phosphorylation. In terms of biological role, component of the cytochrome c oxidase, the last enzyme in the mitochondrial electron transport chain which drives oxidative phosphorylation. The respiratory chain contains 3 multisubunit complexes succinate dehydrogenase (complex II, CII), ubiquinol-cytochrome c oxidoreductase (cytochrome b-c1 complex, complex III, CIII) and cytochrome c oxidase (complex IV, CIV), that cooperate to transfer electrons derived from NADH and succinate to molecular oxygen, creating an electrochemical gradient over the inner membrane that drives transmembrane transport and the ATP synthase. Cytochrome c oxidase is the component of the respiratory chain that catalyzes the reduction of oxygen to water. Electrons originating from reduced cytochrome c in the intermembrane space (IMS) are transferred via the dinuclear copper A center (CU(A)) of subunit 2 and heme A of subunit 1 to the active site in subunit 1, a binuclear center (BNC) formed by heme A3 and copper B (CU(B)). The BNC reduces molecular oxygen to 2 water molecules using 4 electrons from cytochrome c in the IMS and 4 protons from the mitochondrial matrix. In Ovis aries (Sheep), this protein is Cytochrome c oxidase subunit 7A2, mitochondrial (COX7A2).